The following is a 234-amino-acid chain: LexA repressor (234 aa).

The span at 1 to 11 shows a compositional bias: basic and acidic residues; that stretch reads MNEATSHEGPK. The tract at residues 1–34 is disordered; the sequence is MNEATSHEGPKRSLPGRPPGIRADSSGLTDRQRR. A DNA-binding region (H-T-H motif) is located at residues 52 to 72; that stretch reads MREIGQAVGLSSTSSVAHQLM. The span at 83–94 shows a compositional bias: basic and acidic residues; it reads DPHRPRAYEVRG. A disordered region spans residues 83–109; that stretch reads DPHRPRAYEVRGSDQSSSVQPTDTAGK. Residues 95–105 are compositionally biased toward polar residues; the sequence is SDQSSSVQPTD. Residues Ser158 and Lys195 each act as for autocatalytic cleavage activity in the active site.

Belongs to the peptidase S24 family. As to quaternary structure, homodimer.

It carries out the reaction Hydrolysis of Ala-|-Gly bond in repressor LexA.. In terms of biological role, represses a number of genes involved in the response to DNA damage (SOS response), including recA and lexA. In the presence of single-stranded DNA, RecA interacts with LexA causing an autocatalytic cleavage which disrupts the DNA-binding part of LexA, leading to derepression of the SOS regulon and eventually DNA repair. In Streptomyces avermitilis (strain ATCC 31267 / DSM 46492 / JCM 5070 / NBRC 14893 / NCIMB 12804 / NRRL 8165 / MA-4680), this protein is LexA repressor.